The primary structure comprises 236 residues: Small ribosomal subunit protein uS2c (236 aa).

The protein belongs to the universal ribosomal protein uS2 family.

Its subcellular location is the plastid. It localises to the chloroplast. This chain is Small ribosomal subunit protein uS2c (rps2), found in Calycanthus floridus var. glaucus (Eastern sweetshrub).